The primary structure comprises 590 residues: NADH-ubiquinone oxidoreductase chain 5 (590 aa).

The next 18 helical transmembrane spans lie at 1 to 21, 28 to 48, 58 to 78, 81 to 101, 113 to 133, 136 to 156, 176 to 198, 245 to 265, 273 to 293, 310 to 330, 333 to 353, 372 to 392, 395 to 415, 428 to 450, 461 to 481, 501 to 521, 536 to 556, and 568 to 588; these read MFLI…SFMF, FWLS…SFLM, YYDF…TYVC, FYMF…FYAF, FLII…SYDF, AYCG…YFWY, VLLI…TFYF, ALIH…FVYW, YFYN…LCVF, ISFS…LFFC, MFYK…FFGL, LLLI…GFYC, MLLA…LFIS, FLLF…FLLF, ISLY…CIFV, IAIF…GCLF, IFFV…YFVC, and FVIY…LWIL.

The protein belongs to the complex I subunit 5 family.

It localises to the mitochondrion inner membrane. The catalysed reaction is a ubiquinone + NADH + 5 H(+)(in) = a ubiquinol + NAD(+) + 4 H(+)(out). In terms of biological role, core subunit of the mitochondrial membrane respiratory chain NADH dehydrogenase (Complex I) that is believed to belong to the minimal assembly required for catalysis. Complex I functions in the transfer of electrons from NADH to the respiratory chain. The immediate electron acceptor for the enzyme is believed to be ubiquinone. The sequence is that of NADH-ubiquinone oxidoreductase chain 5 (ND5) from Trypanosoma brucei brucei.